The primary structure comprises 102 residues: Biotrophy-associated secreted protein 2 (102 aa).

The N-terminal stretch at 1–19 (MVRVSTFAAILAMALSVTA) is a signal peptide. N46 is a glycosylation site (N-linked (GlcNAc...) asparagine).

It localises to the secreted. Its function is as follows. Secreted effector involved in biotrophic colonization of plant cells. The sequence is that of Biotrophy-associated secreted protein 2 from Pyricularia oryzae (strain 70-15 / ATCC MYA-4617 / FGSC 8958) (Rice blast fungus).